Here is a 122-residue protein sequence, read N- to C-terminus: MGYRKLGRTSDQRKAMLRDLATSLIVNERIETTEARAKELRGVVDSLITLGKKGDLASRRQAAKVVRDVEILNEDDTTQTALQKLFGEIAPRYTDRQGGYTRVLKAGPRRGDGAESAIIELV.

The protein belongs to the bacterial ribosomal protein bL17 family. Part of the 50S ribosomal subunit. Contacts protein L32.

The protein is Large ribosomal subunit protein bL17 of Staphylococcus carnosus (strain TM300).